Here is a 209-residue protein sequence, read N- to C-terminus: Pyroglutamyl-peptidase 1 (209 aa).

Residues Glu85, Cys149, and His168 contribute to the active site.

Belongs to the peptidase C15 family. In terms of assembly, monomer.

The protein localises to the cytoplasm. The catalysed reaction is Release of an N-terminal pyroglutamyl group from a polypeptide, the second amino acid generally not being Pro.. Its function is as follows. Removes 5-oxoproline from various penultimate amino acid residues except L-proline. This Mus musculus (Mouse) protein is Pyroglutamyl-peptidase 1 (Pgpep1).